Consider the following 255-residue polypeptide: Octanoyltransferase (255 aa).

A disordered region spans residues 1 to 27 (MPPASDAHAAPDAAASTSASPQSCAAP). The region spanning 59-240 (PDTGDEIWVV…RLIANLDGAT (182 aa)) is the BPL/LPL catalytic domain. Substrate is bound by residues 99–106 (RGGQITYH), 171–173 (ALG), and 184–186 (GLS). The Acyl-thioester intermediate role is filled by Cys202.

Belongs to the LipB family.

The protein resides in the cytoplasm. It carries out the reaction octanoyl-[ACP] + L-lysyl-[protein] = N(6)-octanoyl-L-lysyl-[protein] + holo-[ACP] + H(+). It participates in protein modification; protein lipoylation via endogenous pathway; protein N(6)-(lipoyl)lysine from octanoyl-[acyl-carrier-protein]: step 1/2. Catalyzes the transfer of endogenously produced octanoic acid from octanoyl-acyl-carrier-protein onto the lipoyl domains of lipoate-dependent enzymes. Lipoyl-ACP can also act as a substrate although octanoyl-ACP is likely to be the physiological substrate. This is Octanoyltransferase from Burkholderia thailandensis (strain ATCC 700388 / DSM 13276 / CCUG 48851 / CIP 106301 / E264).